The sequence spans 295 residues: UDP-N-acetylenolpyruvoylglucosamine reductase (295 aa).

The FAD-binding PCMH-type domain maps to 24–188 (KVGGNAEIFF…LKAVFKVNKG (165 aa)). Residue Arg-168 is part of the active site. Ser-217 (proton donor) is an active-site residue. The active site involves Glu-287.

It belongs to the MurB family. The cofactor is FAD.

It is found in the cytoplasm. The catalysed reaction is UDP-N-acetyl-alpha-D-muramate + NADP(+) = UDP-N-acetyl-3-O-(1-carboxyvinyl)-alpha-D-glucosamine + NADPH + H(+). The protein operates within cell wall biogenesis; peptidoglycan biosynthesis. Cell wall formation. In Rickettsia felis (strain ATCC VR-1525 / URRWXCal2) (Rickettsia azadi), this protein is UDP-N-acetylenolpyruvoylglucosamine reductase.